A 40-amino-acid chain; its full sequence is MADTTGRIPLWIIGTVAGILVIGLIGIFFYGAYSGLGSSL.

Residues 8–28 form a helical membrane-spanning segment; sequence IPLWIIGTVAGILVIGLIGIF.

The protein belongs to the PsbJ family. PSII is composed of 1 copy each of membrane proteins PsbA, PsbB, PsbC, PsbD, PsbE, PsbF, PsbH, PsbI, PsbJ, PsbK, PsbL, PsbM, PsbT, PsbX, PsbY, PsbZ, Psb30/Ycf12, at least 3 peripheral proteins of the oxygen-evolving complex and a large number of cofactors. It forms dimeric complexes.

The protein localises to the plastid. It is found in the chloroplast thylakoid membrane. In terms of biological role, one of the components of the core complex of photosystem II (PSII). PSII is a light-driven water:plastoquinone oxidoreductase that uses light energy to abstract electrons from H(2)O, generating O(2) and a proton gradient subsequently used for ATP formation. It consists of a core antenna complex that captures photons, and an electron transfer chain that converts photonic excitation into a charge separation. This Oenothera elata subsp. hookeri (Hooker's evening primrose) protein is Photosystem II reaction center protein J.